The chain runs to 758 residues: Catalase-peroxidase (758 aa).

Over residues 1-10 (MSDTQDNAPA) the composition is skewed to polar residues. Residues 1–59 (MSDTQDNAPASAQGVDQKAAAGCPVAHDSVTAHGSESESPAIDSPTPHSGGRPRTNRDW) are disordered. The tryptophyl-tyrosyl-methioninium (Trp-Tyr) (with M-276) cross-link spans 128–250 (WHAAGTYRID…VGATEMGLIY (123 aa)). Residue H129 is the Proton acceptor of the active site. Positions 250-276 (YVNPEGPRGNADPAAAAHFIRETFRRM) form a cross-link, tryptophyl-tyrosyl-methioninium (Tyr-Met) (with W-128). Position 291 (H291) interacts with heme b.

Belongs to the peroxidase family. Peroxidase/catalase subfamily. Homodimer or homotetramer. Heme b serves as cofactor. In terms of processing, formation of the three residue Trp-Tyr-Met cross-link is important for the catalase, but not the peroxidase activity of the enzyme.

The catalysed reaction is H2O2 + AH2 = A + 2 H2O. It carries out the reaction 2 H2O2 = O2 + 2 H2O. Functionally, bifunctional enzyme with both catalase and broad-spectrum peroxidase activity. This chain is Catalase-peroxidase, found in Salinispora arenicola (strain CNS-205).